The following is a 113-amino-acid chain: Protein Wnt-10 (113 aa).

The O-palmitoleoyl serine; by PORCN moiety is linked to residue Ser1. A disulfide bridge connects residues Cys79 and Cys94.

This sequence belongs to the Wnt family. Palmitoleoylation is required for efficient binding to frizzled receptors. Depalmitoleoylation leads to Wnt signaling pathway inhibition.

It is found in the secreted. It localises to the extracellular space. The protein localises to the extracellular matrix. Ligand for members of the frizzled family of seven transmembrane receptors. Probable developmental protein. May be a signaling molecule which affects the development of discrete regions of tissues. Is likely to signal over only few cell diameters. This chain is Protein Wnt-10 (WNT-10), found in Eptatretus stoutii (Pacific hagfish).